Reading from the N-terminus, the 255-residue chain is F-box/SPRY domain-containing protein 1 (255 aa).

The 49-residue stretch at 3 to 51 (DPVAALCNYNVLEVIFSYLELEDLNHCSQVCKSWYHFLNDENSDVWRWH) folds into the F-box domain. Residues 61 to 253 (LKSDLLASVS…VSMVYLGTPL (193 aa)) enclose the B30.2/SPRY domain.

Belongs to the FBXO45/Fsn family. As to quaternary structure, component of an E3 ubiquitin ligase complex composed of hiw and Fsn.

It localises to the synapse. It functions in the pathway protein modification; protein ubiquitination. Its function is as follows. Required in the presynaptic motoneuron to down-regulate the levels of wnd and restrain synaptic terminal growth at the neuromuscular junction (NMJ). This chain is F-box/SPRY domain-containing protein 1, found in Drosophila yakuba (Fruit fly).